Consider the following 564-residue polypeptide: Glutamyl-tRNA(Gln) amidotransferase subunit B, mitochondrial (564 aa).

A mitochondrion-targeting transit peptide spans 1 to 88 (MIRQCVSHRG…DTDAKLFSRA (88 aa)). A disordered region spans residues 26-63 (PFHHPSPRPLGRKNWSTSDEAKSKRAAMRKGGAPPPEH).

This sequence belongs to the GatB/GatE family. GatB subfamily. Subunit of the heterotrimeric GatCAB amidotransferase (AdT) complex, composed of A, B and C subunits.

It localises to the mitochondrion. It catalyses the reaction L-glutamyl-tRNA(Gln) + L-glutamine + ATP + H2O = L-glutaminyl-tRNA(Gln) + L-glutamate + ADP + phosphate + H(+). Functionally, allows the formation of correctly charged Gln-tRNA(Gln) through the transamidation of misacylated Glu-tRNA(Gln) in the mitochondria. The reaction takes place in the presence of glutamine and ATP through an activated gamma-phospho-Glu-tRNA(Gln). In Ajellomyces capsulatus (strain G186AR / H82 / ATCC MYA-2454 / RMSCC 2432) (Darling's disease fungus), this protein is Glutamyl-tRNA(Gln) amidotransferase subunit B, mitochondrial.